Here is a 480-residue protein sequence, read N- to C-terminus: RNA-binding protein 42 (480 aa).

The tract at residues 1-30 (MAGAGPAPGLPGAGGPVVPGPGAGIPGKSG) is disordered. A2 bears the N-acetylalanine mark. Positions 11-27 (PGAGGPVVPGPGAGIPG) are enriched in gly residues. S135 bears the Phosphoserine mark. R153, R158, R168, and R181 each carry asymmetric dimethylarginine. The interval 236 to 480 (ELGLGLGLGL…QKEKKKLGLR (245 aa)) is necessary for interaction with HNRNPK. Residues 319–356 (SLRPRPRPPRPEPPPGLMALEVPEPLGEDKKKGKPEKL) form a disordered region. The segment covering 345–356 (GEDKKKGKPEKL) has biased composition (basic and acidic residues). In terms of domain architecture, RRM spans 381-459 (FRIFCGDLGN…RPIKLRKSMW (79 aa)).

The protein belongs to the RRM RBM42 family. Interacts with HNRNPK.

The protein localises to the nucleus. It is found in the cytoplasm. Functionally, binds (via the RRM domain) to the 3'-untranslated region (UTR) of CDKN1A mRNA. This chain is RNA-binding protein 42 (RBM42), found in Homo sapiens (Human).